A 342-amino-acid polypeptide reads, in one-letter code: L-threonine 3-dehydrogenase (342 aa).

Cys38 provides a ligand contact to Zn(2+). Catalysis depends on charge relay system residues Thr40 and His43. Zn(2+) is bound by residues His63, Glu64, Cys93, Cys96, Cys99, and Cys107. Residues Ile175, Asp195, Arg200, 262–264 (LGI), and 286–287 (IY) contribute to the NAD(+) site.

It belongs to the zinc-containing alcohol dehydrogenase family. In terms of assembly, homotetramer. The cofactor is Zn(2+).

The protein localises to the cytoplasm. It carries out the reaction L-threonine + NAD(+) = (2S)-2-amino-3-oxobutanoate + NADH + H(+). The protein operates within amino-acid degradation; L-threonine degradation via oxydo-reductase pathway; glycine from L-threonine: step 1/2. In terms of biological role, catalyzes the NAD(+)-dependent oxidation of L-threonine to 2-amino-3-ketobutyrate. This is L-threonine 3-dehydrogenase from Burkholderia cenocepacia (strain ATCC BAA-245 / DSM 16553 / LMG 16656 / NCTC 13227 / J2315 / CF5610) (Burkholderia cepacia (strain J2315)).